The following is a 309-amino-acid chain: Isopentenyl-diphosphate Delta-isomerase II (309 aa).

Position 112 (K112) interacts with substrate. Mg(2+)-binding residues include H116 and H128. Residues L126–L278 enclose the Nudix hydrolase domain. Residues R147 and K151 each coordinate substrate. Residue C163 is part of the active site. Residue S164 participates in substrate binding. Mg(2+)-binding residues include E223 and E225. Residue E225 is part of the active site.

It belongs to the IPP isomerase type 1 family. Requires Mg(2+) as cofactor.

The catalysed reaction is isopentenyl diphosphate = dimethylallyl diphosphate. It participates in isoprenoid biosynthesis; dimethylallyl diphosphate biosynthesis; dimethylallyl diphosphate from isopentenyl diphosphate: step 1/1. Its pathway is porphyrin-containing compound metabolism; chlorophyll biosynthesis. Functionally, catalyzes the 1,3-allylic rearrangement of the homoallylic substrate isopentenyl (IPP) to its highly electrophilic allylic isomer, dimethylallyl diphosphate (DMAPP). This chain is Isopentenyl-diphosphate Delta-isomerase II (IPI2), found in Camptotheca acuminata (Happy tree).